The primary structure comprises 144 residues: Bombinins BLP-7/GH-2 (144 aa).

Residues 1-18 (MNFKYIVAVSFLIASTYA) form the signal peptide. Residues 19–43 (RSVKNDEQSLSQRDVLEEESLREIR) constitute a propeptide that is removed on maturation. Asparagine amide is present on Asn70. Positions 74–123 (TAEEHEVMKRLEAVMRDLDSLDYPEEASEMETRSFNQEEIANLFTKKEKR) are excised as a propeptide. The residue at position 143 (Ile143) is an Isoleucine amide.

This sequence belongs to the bombinin family. As to expression, expressed by the skin glands.

It localises to the secreted. Its function is as follows. Antimicrobial peptide with activity against Gram-positive and -negative bacteria and fungi. Shows activity against P.acnes (MIC=5 uM), E.coli (MIC=5-6.3 uM), S.aureus (MIC=5-6.3 uM), M.luteus, S.cerevisiae and C.albicans (MIC=10-12.5 uM). Also reduces the production of interleukin (IL)-8 and granulocyte-macrophage colony stimulating factor (CSF2) in normal human epidermal keratinocytes (NHEKs). Shows anticancer activity against three human hepatoma cell lines. In vivo, using the rat ear edema model, suppress P.acnes-induced skin inflammation, significantly reducing the ear thickness. Shows weak hemolytic activity against human erythrocytes. In terms of biological role, shows weak antimicrobial activity but high hemolytic activity. The protein is Bombinins BLP-7/GH-2 of Bombina orientalis (Oriental fire-bellied toad).